A 775-amino-acid polypeptide reads, in one-letter code: Chitin synthase 6 (775 aa).

Transmembrane regions (helical) follow at residues 19 to 39 (VLLM…YCLV), 54 to 74 (CIIV…IMVV), 94 to 114 (LQWF…LFCI), 441 to 461 (FMQN…LAIM), 470 to 490 (LPVG…LYFG), and 498 to 518 (IWLY…YMVY). Residues 532–541 (RADAAAADSH) are compositionally biased toward low complexity. Disordered stretches follow at residues 532 to 603 (RADA…DGKF) and 702 to 775 (PSAF…KTSR). Over residues 542–556 (TTAREAAEQAEKQGD) the composition is skewed to basic and acidic residues. A compositionally biased stretch (polar residues) spans 577–586 (NRESTTTSEL). The segment covering 702–713 (PSAFPHAHSASA) has biased composition (low complexity). Residue N724 is glycosylated (N-linked (GlcNAc...) asparagine). A compositionally biased stretch (basic and acidic residues) spans 732-741 (RSEDIQRFSE). Over residues 754–763 (SRNVGNSSFA) the composition is skewed to polar residues. N759 carries an N-linked (GlcNAc...) asparagine glycan. The segment covering 766–775 (MAKRTPKTSR) has biased composition (basic residues).

Belongs to the chitin synthase family. Class VII subfamily.

It is found in the cell membrane. It carries out the reaction [(1-&gt;4)-N-acetyl-beta-D-glucosaminyl](n) + UDP-N-acetyl-alpha-D-glucosamine = [(1-&gt;4)-N-acetyl-beta-D-glucosaminyl](n+1) + UDP + H(+). In terms of biological role, polymerizes chitin, a structural polymer of the cell wall and septum, by transferring the sugar moiety of UDP-GlcNAc to the non-reducing end of the growing chitin polymer. Shows additive effects in septum formation with CHS1, CHS2, CHS3A, CHS4, CHS5 and CHS7. Involved in virulence and mediates mycotoxin deoxinivalenol (DON) biosynthesis via the regulation of the expression of TRI4, TRI5 and TRI6. This Gibberella zeae (strain ATCC MYA-4620 / CBS 123657 / FGSC 9075 / NRRL 31084 / PH-1) (Wheat head blight fungus) protein is Chitin synthase 6.